Here is a 484-residue protein sequence, read N- to C-terminus: Glutamyl-tRNA(Gln) amidotransferase subunit A (484 aa).

Catalysis depends on charge relay system residues Lys77 and Ser152. Ser176 serves as the catalytic Acyl-ester intermediate.

It belongs to the amidase family. GatA subfamily. In terms of assembly, heterotrimer of A, B and C subunits.

The enzyme catalyses L-glutamyl-tRNA(Gln) + L-glutamine + ATP + H2O = L-glutaminyl-tRNA(Gln) + L-glutamate + ADP + phosphate + H(+). Its function is as follows. Allows the formation of correctly charged Gln-tRNA(Gln) through the transamidation of misacylated Glu-tRNA(Gln) in organisms which lack glutaminyl-tRNA synthetase. The reaction takes place in the presence of glutamine and ATP through an activated gamma-phospho-Glu-tRNA(Gln). This is Glutamyl-tRNA(Gln) amidotransferase subunit A from Lacticaseibacillus casei (strain BL23) (Lactobacillus casei).